The following is a 384-amino-acid chain: Chaperone protein DnaJ (384 aa).

Residues 4-68 (DFYEILGVSR…EKRQMYDQMG (65 aa)) enclose the J domain. Disordered regions lie at residues 29–60 (REYH…DEEK) and 73–131 (EQAE…GQDL). Over residues 42–60 (EEKFKQAKKAKEVLTDEEK) the composition is skewed to basic and acidic residues. Positions 80–101 (GAGGGGGRGGMGGDPFGGGAGG) are enriched in gly residues. A compositionally biased stretch (low complexity) spans 102-111 (FDMQDIFDQF). The span at 112–121 (FGGGGRGGRG) shows a compositional bias: gly residues. A CR-type zinc finger spans residues 145-227 (GATKQLNVTR…CRGNGVVQND (83 aa)). Cys158, Cys161, Cys175, and Cys178 together coordinate Zn(2+). 4 CXXCXGXG motif repeats span residues 158–165 (CDDCDGAG), 175–182 (CPECNGQG), 201–208 (CRRCDGEG), and 215–222 (CSTCRGNG). Residues 160-191 (DCDGAGHPPGADSETCPECNGQGQTTQVQQTP) are disordered. The segment covering 180–190 (GQGQTTQVQQT) has biased composition (low complexity). Residues Cys201, Cys204, Cys215, and Cys218 each contribute to the Zn(2+) site.

This sequence belongs to the DnaJ family. Homodimer. It depends on Zn(2+) as a cofactor.

Its subcellular location is the cytoplasm. Its function is as follows. Participates actively in the response to hyperosmotic and heat shock by preventing the aggregation of stress-denatured proteins and by disaggregating proteins, also in an autonomous, DnaK-independent fashion. Unfolded proteins bind initially to DnaJ; upon interaction with the DnaJ-bound protein, DnaK hydrolyzes its bound ATP, resulting in the formation of a stable complex. GrpE releases ADP from DnaK; ATP binding to DnaK triggers the release of the substrate protein, thus completing the reaction cycle. Several rounds of ATP-dependent interactions between DnaJ, DnaK and GrpE are required for fully efficient folding. Also involved, together with DnaK and GrpE, in the DNA replication of plasmids through activation of initiation proteins. The sequence is that of Chaperone protein DnaJ from Haloarcula marismortui (strain ATCC 43049 / DSM 3752 / JCM 8966 / VKM B-1809) (Halobacterium marismortui).